A 262-amino-acid chain; its full sequence is Fibroin light chain (262 aa).

The first 16 residues, 1–16, serve as a signal peptide directing secretion; that stretch reads MKPIFLVLLVATSAYA. S19 carries the N-acetylserine; in short form modification. C101 and C160 are disulfide-bonded.

In terms of assembly, silk fibroin elementary unit consists in a disulfide-linked heavy and light chain and a p25 glycoprotein in molar ratios of 6:6:1. This results in a complex of approximately 2.3 MDa. The interchain disulfide bridge is essential for the intracellular transport and secretion of fibroin. In terms of processing, partially N-terminally processed to yield a short form which lacks the first two residues of the long form. As to expression, produced exclusively in the posterior (PSG) section of silk glands, which are essentially modified salivary glands.

Its subcellular location is the secreted. In terms of biological role, it is likely that the major role of L-chain is to prevent the retention of H-chain in ER by forming the disulfide linkage. This Bombyx mori (Silk moth) protein is Fibroin light chain (FIBL).